We begin with the raw amino-acid sequence, 342 residues long: N-acetyl-gamma-glutamyl-phosphate reductase (342 aa).

Cysteine 149 is a catalytic residue.

It belongs to the NAGSA dehydrogenase family. Type 1 subfamily.

The protein localises to the cytoplasm. The enzyme catalyses N-acetyl-L-glutamate 5-semialdehyde + phosphate + NADP(+) = N-acetyl-L-glutamyl 5-phosphate + NADPH + H(+). It participates in amino-acid biosynthesis; L-arginine biosynthesis; N(2)-acetyl-L-ornithine from L-glutamate: step 3/4. Its function is as follows. Catalyzes the NADPH-dependent reduction of N-acetyl-5-glutamyl phosphate to yield N-acetyl-L-glutamate 5-semialdehyde. The polypeptide is N-acetyl-gamma-glutamyl-phosphate reductase (Cereibacter sphaeroides (strain KD131 / KCTC 12085) (Rhodobacter sphaeroides)).